The following is a 290-amino-acid chain: Homeobox protein HMX3-B (290 aa).

2 disordered regions span residues 1 to 41 and 96 to 169; these read MADS…GSSK and EKVN…KKKT. Residues 107–124 show a composition bias toward basic and acidic residues; sequence LDRHTPDPPKSDQESKEE. The segment covering 125–137 has biased composition (acidic residues); it reads SADDEIALEESDA. Over residues 138-162 the composition is skewed to basic and acidic residues; the sequence is EEPKKETDQEDDWMRKGEDLESDKK. Positions 166–225 form a DNA-binding region, homeobox; that stretch reads KKKTRTVFSRSQVFQLESTFDIKRYLSSSERAGLAASLHLTETQVKIWFQNRRNKWKRQL.

Belongs to the HMX homeobox family. In terms of tissue distribution, expressed in the ear placode and vesicle and in cells forming the vestibulo-acoustic ganglion.

It localises to the nucleus. In terms of biological role, transcription factor involved in specification of neuronal cell types and which is required for inner ear and hypothalamus development. Binds to the 5'-CAAGTG-3' core sequence. The chain is Homeobox protein HMX3-B (hmx3b) from Oryzias latipes (Japanese rice fish).